A 550-amino-acid polypeptide reads, in one-letter code: Glucose-6-phosphate isomerase (550 aa).

Catalysis depends on Glu-356, which acts as the Proton donor. Residues His-387 and Lys-515 contribute to the active site.

It belongs to the GPI family.

It localises to the cytoplasm. It catalyses the reaction alpha-D-glucose 6-phosphate = beta-D-fructose 6-phosphate. The protein operates within carbohydrate biosynthesis; gluconeogenesis. It functions in the pathway carbohydrate degradation; glycolysis; D-glyceraldehyde 3-phosphate and glycerone phosphate from D-glucose: step 2/4. Functionally, catalyzes the reversible isomerization of glucose-6-phosphate to fructose-6-phosphate. In Vibrio campbellii (strain ATCC BAA-1116), this protein is Glucose-6-phosphate isomerase.